The chain runs to 96 residues: Large ribosomal subunit protein bL27 (96 aa).

Positions 1 to 9 (MLKFDIQHF) are excised as a propeptide. Residues 1 to 33 (MLKFDIQHFAHKKGGGSTSNGRDSESKRLGAKR) are disordered. A compositionally biased stretch (basic and acidic residues) spans 22 to 33 (RDSESKRLGAKR).

The protein belongs to the bacterial ribosomal protein bL27 family. Post-translationally, the N-terminus is cleaved by ribosomal processing cysteine protease Prp.

This chain is Large ribosomal subunit protein bL27, found in Listeria innocua serovar 6a (strain ATCC BAA-680 / CLIP 11262).